The following is a 440-amino-acid chain: Aclacinomycin-T 2-deoxy-L-fucose transferase (440 aa).

The enzyme catalyses dTDP-2-deoxy-beta-L-fucose + aclacinomycin T = aclacinomycin S + dTDP + H(+). Involved in the biosynthesis of the trisaccharide moiety characteristic of the antitumor drug aclacinomycins. In the first reaction, AknK catalyzes the transfer of 2-deoxy-beta-L-fucose from the activated donor dTDP-2-deoxy-beta-L-fucose to the mono-glycosylated aclacinomycin T (rhodosaminyl aklavinone), forming the di-glycosylated aclacinomycin S (L-2-deoxyfucosyl-L-rhodosaminyl aklavinone). It can also catalyze the addition of an alternate dTDP-L-sugar, dTDP-L-daunosamine, to aclacinomycin T and the addition of 2-deoxy-beta-L-fucose to the mono-glycosylated aglycones (monoglycosylated anthracyclines) such as daunomycin (daunorubicin), adriamycin (doxorubicin) and idarubicin. In vitro, AknK also catalyzes the addition of a second L-2-deoxyfucosyl moiety from dTDP-2-deoxy-beta-L-fucose, albeit with reduced activity, to the natural disaccharide chain of aclacinomycin S to produce L-deoxyfucosyl-L-deoxyfucosyl-L-rhodosaminyl aklavinone (2-deoxy-alpha-D-fucosyl-aclacinomycin S), a variant of the natural aclacinomycin A. This is Aclacinomycin-T 2-deoxy-L-fucose transferase from Streptomyces galilaeus.